The sequence spans 326 residues: Malate dehydrogenase (326 aa).

12–18 (GGTGQIA) is an NAD(+) binding site. 2 residues coordinate substrate: Arg-93 and Arg-99. Residues Asn-106, Gln-113, and 130-132 (VGN) each bind NAD(+). Substrate contacts are provided by Asn-132 and Arg-163. His-188 serves as the catalytic Proton acceptor.

This sequence belongs to the LDH/MDH superfamily. MDH type 2 family.

It catalyses the reaction (S)-malate + NAD(+) = oxaloacetate + NADH + H(+). Its function is as follows. Catalyzes the reversible oxidation of malate to oxaloacetate. The polypeptide is Malate dehydrogenase (Chlamydia trachomatis serovar L2 (strain ATCC VR-902B / DSM 19102 / 434/Bu)).